A 499-amino-acid chain; its full sequence is Phenylalanine--tRNA ligase alpha subunit (499 aa).

Residues T342, Q381–D383, and F422 each bind L-phenylalanine. E424 contributes to the Mg(2+) binding site. An L-phenylalanine-binding site is contributed by F447.

It belongs to the class-II aminoacyl-tRNA synthetase family. Phe-tRNA synthetase alpha subunit type 2 subfamily. In terms of assembly, tetramer of two alpha and two beta subunits. Mg(2+) serves as cofactor.

It is found in the cytoplasm. It catalyses the reaction tRNA(Phe) + L-phenylalanine + ATP = L-phenylalanyl-tRNA(Phe) + AMP + diphosphate + H(+). This is Phenylalanine--tRNA ligase alpha subunit from Pyrococcus furiosus (strain ATCC 43587 / DSM 3638 / JCM 8422 / Vc1).